The primary structure comprises 299 residues: Large ribosomal subunit protein uL18 (299 aa).

This sequence belongs to the universal ribosomal protein uL18 family. In terms of assembly, component of the large ribosomal subunit (LSU). Interacts with Fmr1 to form the RNA-induced silencing complex (RISC), a ribonucleoprotein (RNP) complex involved in translation regulation, other components of the complex are Rm62, RpL11, AGO2 and Dcr-1.

Its subcellular location is the cytoplasm. The protein resides in the nucleus. Component of the ribosome, a large ribonucleoprotein complex responsible for the synthesis of proteins in the cell. The small ribosomal subunit (SSU) binds messenger RNAs (mRNAs) and translates the encoded message by selecting cognate aminoacyl-transfer RNA (tRNA) molecules. The large subunit (LSU) contains the ribosomal catalytic site termed the peptidyl transferase center (PTC), which catalyzes the formation of peptide bonds, thereby polymerizing the amino acids delivered by tRNAs into a polypeptide chain. The nascent polypeptides leave the ribosome through a tunnel in the LSU and interact with protein factors that function in enzymatic processing, targeting, and the membrane insertion of nascent chains at the exit of the ribosomal tunnel. The chain is Large ribosomal subunit protein uL18 (RpL5) from Drosophila melanogaster (Fruit fly).